Consider the following 430-residue polypeptide: DD-carboxypeptidase/endopeptidase Mpg (430 aa).

Positions 295, 299, and 375 each coordinate Zn(2+).

The protein belongs to the peptidase M23B family. Monomer. The cofactor is Zn(2+). Likely to be synthesized as a proenzyme. The cleavage of the N-terminal domain is probably required for the activation of the enzyme.

It is found in the cell outer membrane. Functionally, has both endopeptidase and DD-carboxypeptidase activities. Degrades cell wall peptidoglycan (PG) to allow consummate expression of pili. This is DD-carboxypeptidase/endopeptidase Mpg from Neisseria meningitidis serogroup B (strain ATCC 13091 / M2091).